Consider the following 235-residue polypeptide: Endonuclease V (235 aa).

The Mg(2+) site is built by Asp47 and Asp115.

It belongs to the endonuclease V family. It depends on Mg(2+) as a cofactor.

The protein localises to the cytoplasm. It carries out the reaction Endonucleolytic cleavage at apurinic or apyrimidinic sites to products with a 5'-phosphate.. Functionally, DNA repair enzyme involved in the repair of deaminated bases. Selectively cleaves double-stranded DNA at the second phosphodiester bond 3' to a deoxyinosine leaving behind the intact lesion on the nicked DNA. This chain is Endonuclease V, found in Myxococcus xanthus (strain DK1622).